Reading from the N-terminus, the 755-residue chain is Biodegradative arginine decarboxylase (755 aa).

N6-(pyridoxal phosphate)lysine is present on Lys386.

It belongs to the Orn/Lys/Arg decarboxylase class-I family. As to quaternary structure, homodecamer. The basic unit is a homodimer, organized into a ring of giving a pentamer of five homodimers. It depends on pyridoxal 5'-phosphate as a cofactor.

It localises to the cytoplasm. The catalysed reaction is L-arginine + H(+) = agmatine + CO2. Its activity is regulated as follows. Homodimers are probably inactive, their assembly into a homodecamer at low pH requires neutralization of negatively charged residues. This uses cytoplasmic protons, contributing pH regulation and stabilizes the homodecamer. Functionally, component of the acid-resistance (AR) system allowing enteric pathogens to survive the acidic environment in the stomach. ADC can be found in two forms: biodegradative (this enzyme) and biosynthetic (speA). The biodegradative form plays a role in regulating pH by consuming proteins. Converts arginine imported by AdiC to agmatine which is then exported by AdiC. This is Biodegradative arginine decarboxylase (adiA) from Escherichia coli (strain K12).